The sequence spans 287 residues: Ribosomal RNA small subunit methyltransferase A (287 aa).

S-adenosyl-L-methionine contacts are provided by Asn28, Leu30, Gly55, Glu77, Asp103, and Asn123.

Belongs to the class I-like SAM-binding methyltransferase superfamily. rRNA adenine N(6)-methyltransferase family. RsmA subfamily.

It localises to the cytoplasm. It catalyses the reaction adenosine(1518)/adenosine(1519) in 16S rRNA + 4 S-adenosyl-L-methionine = N(6)-dimethyladenosine(1518)/N(6)-dimethyladenosine(1519) in 16S rRNA + 4 S-adenosyl-L-homocysteine + 4 H(+). Its function is as follows. Specifically dimethylates two adjacent adenosines (A1518 and A1519) in the loop of a conserved hairpin near the 3'-end of 16S rRNA in the 30S particle. May play a critical role in biogenesis of 30S subunits. In Rhodopseudomonas palustris (strain BisB5), this protein is Ribosomal RNA small subunit methyltransferase A.